A 173-amino-acid chain; its full sequence is C-phycocyanin beta subunit (173 aa).

Asn73 is modified (N4-methylasparagine). (2R,3E)-phycocyanobilin contacts are provided by Cys83 and Cys154.

Belongs to the phycobiliprotein family. In terms of assembly, heterodimer of an alpha and a beta subunit. Heterodimers further assemble into trimers and the trimers into hexamers. In terms of processing, contains two covalently linked bilin chromophores.

It is found in the cellular thylakoid membrane. Light-harvesting photosynthetic bile pigment-protein from the phycobiliprotein complex (phycobilisome, PBS). Phycocyanin is the major phycobiliprotein in the PBS rod. This is C-phycocyanin beta subunit (cpcB) from Mastigocladus laminosus (Fischerella sp.).